Consider the following 3630-residue polypeptide: Trimeric autotransporter adhesin AtaA (3630 aa).

An N-terminal signal peptide occupies residues 1 to 23; sequence MNKIYKVIWNATLLAWVAVSELA. Residues 24 to 3487 are surface exposed passenger domain; the sequence is KGKTKSTTSK…TNQAVVNYLG (3464 aa). The segment at 108 to 315 is N-terminal YadA-like head; sequence SIAIGENAQG…ASDAVTVAQL (208 aa). The tract at residues 316–2904 is N-terminal stalk; that stretch reads DKAYDDTNGR…GRAATEEQLK (2589 aa). Residues 2905 to 3169 are C-terminal YadA-like head; sequence AVITSNITEV…DSDAVNVAQL (265 aa). A C-terminal stalk region spans residues 3170–3561; the sequence is KAVGNQVVTT…DVEKKANAGI (392 aa). The outer membrane translocation of the passenger domain stretch occupies residues 3539–3574; that stretch reads LDNAFRITNNRIDDVEKKANAGIAAAMALESAPYVP. Beta stranded transmembrane passes span 3575–3585, 3589–3599, 3608–3614, and 3618–3629; these read GKYTYAAGAAY, ENAVGVTLRKT, TGGVAAA, and DASVRIGISGVI. A translocator domain region spans residues 3575–3630; that stretch reads GKYTYAAGAAYHGGENAVGVTLRKTADNGRWSITGGVAAASQGDASVRIGISGVID.

Belongs to the autotransporter-2 (AT-2) (TC 1.B.40) family. In terms of assembly, homotrimer. Interacts with TpgA.

The protein localises to the cell surface. The protein resides in the cell outer membrane. Its function is as follows. Responsible for autoagglutination, and for adhesion to abiotic and biotic surfaces such as polystyrene (PS), type I collagen, polypropylene (PP), polyvinylchloride (PVC), glass and stainless steel (SS). Adhesion is much stronger than that mediated by Yersinia YadA in a comparative assay. Confers autoagglutination and binding to PS, type I collagen, PP, PVC, glass and SS upon expression in Acinetobacter baylyi strain ADP1. Involved in rapid, irreversible adherence to polyurethane. Forms an unusual biofilm. An extended, surface exposed fiber binds to quartz crystals, PS and glass. It can be removed by washing in distilled water. The sequence is that of Trimeric autotransporter adhesin AtaA from Acinetobacter sp. (strain Tol 5).